We begin with the raw amino-acid sequence, 368 residues long: tRNA 2-selenouridine synthase (368 aa).

Residues 15–138 form the Rhodanese domain; sequence MLSGHPMIDV…MRQYLIEVID (124 aa). The active-site S-selanylcysteine intermediate is Cys98.

The protein belongs to the SelU family. Monomer.

It carries out the reaction 5-methylaminomethyl-2-thiouridine(34) in tRNA + selenophosphate + (2E)-geranyl diphosphate + H2O + H(+) = 5-methylaminomethyl-2-selenouridine(34) in tRNA + (2E)-thiogeraniol + phosphate + diphosphate. The enzyme catalyses 5-methylaminomethyl-2-thiouridine(34) in tRNA + (2E)-geranyl diphosphate = 5-methylaminomethyl-S-(2E)-geranyl-thiouridine(34) in tRNA + diphosphate. It catalyses the reaction 5-methylaminomethyl-S-(2E)-geranyl-thiouridine(34) in tRNA + selenophosphate + H(+) = 5-methylaminomethyl-2-(Se-phospho)selenouridine(34) in tRNA + (2E)-thiogeraniol. The catalysed reaction is 5-methylaminomethyl-2-(Se-phospho)selenouridine(34) in tRNA + H2O = 5-methylaminomethyl-2-selenouridine(34) in tRNA + phosphate. In terms of biological role, involved in the post-transcriptional modification of the uridine at the wobble position (U34) of tRNA(Lys), tRNA(Glu) and tRNA(Gln). Catalyzes the conversion of 2-thiouridine (S2U-RNA) to 2-selenouridine (Se2U-RNA). Acts in a two-step process involving geranylation of 2-thiouridine (S2U) to S-geranyl-2-thiouridine (geS2U) and subsequent selenation of the latter derivative to 2-selenouridine (Se2U) in the tRNA chain. This chain is tRNA 2-selenouridine synthase, found in Shewanella woodyi (strain ATCC 51908 / MS32).